A 587-amino-acid chain; its full sequence is Xyloglucan-specific endo-beta-1,4-glucanase BoGH9A (587 aa).

A signal peptide spans 1 to 19 (MKIVRYIALFGILSGLAVA). A lipid anchor (N-palmitoyl cysteine) is attached at Cys20. Cys20 carries the S-diacylglycerol cysteine lipid modification. Asp185 (nucleophile) is an active-site residue. Residues His511 and Asp553 contribute to the active site. Glu562 serves as the catalytic Proton donor.

Belongs to the glycosyl hydrolase 9 (cellulase E) family.

It localises to the cell outer membrane. It carries out the reaction xyloglucan + H2O = xyloglucan oligosaccharides.. Its pathway is glucan metabolism; xyloglucan degradation. Functionally, catalyzes endohydrolysis of 1,4-beta-D-glucosidic linkages in xyloglucan with retention of the beta-configuration of the glycosyl residues in xyloglucan degradation. Cleaves the backbone of the 3 major types of natural xyloglucans (seed galactoxyloglucan from tamarind kernel, dicot fucogalactoxyloglucan from lettuce leaves, and solanaceous arabinogalactoxyloglucan from tomato fruit), to produce xyloglucan oligosaccharides. May be superfluous in xyloglucan degradation compared to BoGH5A (AC A7LXT7), the other Xyloglucan-specific endo-beta-1,4-glucanase. This Bacteroides ovatus (strain ATCC 8483 / DSM 1896 / JCM 5824 / BCRC 10623 / CCUG 4943 / NCTC 11153) protein is Xyloglucan-specific endo-beta-1,4-glucanase BoGH9A.